The primary structure comprises 462 residues: Chromosomal replication initiator protein DnaA (462 aa).

The tract at residues M1–A83 is domain I, interacts with DnaA modulators. Residues A83–S125 form a domain II region. A disordered region spans residues S105–V127. The span at W112 to V127 shows a compositional bias: polar residues. Residues N126–A342 form a domain III, AAA+ region region. Positions 170, 172, 173, and 174 each coordinate ATP. A domain IV, binds dsDNA region spans residues N343 to S462.

Belongs to the DnaA family. In terms of assembly, oligomerizes as a right-handed, spiral filament on DNA at oriC.

The protein resides in the cytoplasm. Plays an essential role in the initiation and regulation of chromosomal replication. ATP-DnaA binds to the origin of replication (oriC) to initiate formation of the DNA replication initiation complex once per cell cycle. Binds the DnaA box (a 9 base pair repeat at the origin) and separates the double-stranded (ds)DNA. Forms a right-handed helical filament on oriC DNA; dsDNA binds to the exterior of the filament while single-stranded (ss)DNA is stabiized in the filament's interior. The ATP-DnaA-oriC complex binds and stabilizes one strand of the AT-rich DNA unwinding element (DUE), permitting loading of DNA polymerase. After initiation quickly degrades to an ADP-DnaA complex that is not apt for DNA replication. Binds acidic phospholipids. The protein is Chromosomal replication initiator protein DnaA of Yersinia enterocolitica serotype O:8 / biotype 1B (strain NCTC 13174 / 8081).